The primary structure comprises 1812 residues: MDQSILSKITSDDYVNAILHTSATRVGSDLHNAMCNVIVDQIKDSTEKNKKKKKIDVKRNLNEDQIQLLAELFPERRVVTSSVHRGTHSMAAAMRKIETDVIFTSFPKNGVIYDIGGNWATHAKRDDGGFVHCCCPILDFRDAQRKMTRLIDFNRFIDDAKVVSAEKAAVAAQIKKDCDLISENAKKDAYDANDLNGTWFCQNKFEDCVYDHSTLGDGKKEAYGMAIHSIYDIHLVDLVSAMERKKVRVLKGTFLFSADIIIGKKRGELPSVNGFYIIDGESIKYSFYDDPNCGYEHNLNSLMLYVTKTFVKAAGGAVYYLELTEMRGDTMFFTITDASEARVMGVLHDSSTKCLPLNKRDLVVFPLFDIDRATDELVFREELLSREFVNRALEYAFQLKDNQVTAEGLISYFASTNNAVVIGGSARKTSEKVDPKLLPMITTTLMVYQELQKAKQKRVLGKLKSKVKEELTLSGILESVVHRVFGRQSLYQRGLGVFAKWMQYSYGQDLVGIHDVPLYLEINDRIKLGSALKNVNGFSLSFSELDEKVSLYEEYERERQRISDEIVSEKIGLIGEGYVKVGESSLKPKQKVASRDGMAQWVSGECHLYNTMKCEEKPVEKPRRFSKVVLEEWISEGNCFALNNSFGDEVHWFDSLKEACGRAWRKQVSAVTFSDAEYFDNIENTENEELEEEEVIKTTEQVEQDWPIGNLPDVDPDDSASAQVCLTESASTSSDEDCDPMEQLIVAACERAFATKKFEEVTMDSQVVQSEEIEIVREGEHAHANLSSGESESSSQSQELVAVGSVPLSKWAQMVEDSEVRARQCAVDHDLSWDEVKYAKMPERPEEAEGDDFRTKAKREFLWYLKCKLVADKSTLVEIMRDFIYGQFHSGACETPKNACFLSYEKNVCGEWMFGKRYRHPSKGASSYAVRFTREDWKRAKLIKLQWKNAKAEENGEMSSDNSDKPIVPQGETGIYLFCDITFLMNEIPILNRLEISFKKRVQRRAPRITLVDGVPGCGKSTYVVKEANLVNQYVVTIGREAAEDLRERFKSERNATATQLKRVRTVDSYLLNDTQSRANVLHFDEALMAHAGMVYFCADDLSARSVICQGDSQQIPFINRVESITLRYSKLEIDNVVEKRLTYRSPLDVASYLTKKNFYGTSVVTSANPLVRSLKTVGPRDGMTSIYSIPKIPGTQYLTFLQSEKEEMRQYLGRGNWNVNTVHESQGKTYDNVVLCRLKATDNEIYPGGRNSSPYMVVGVTRHRRSLVYYTKAEDKLYFDLAEMLSVQEGKLMKHLHEEGVKXRQASKYEEIMVSDNAVTVPDVGNLVDLQEMYDIAFPGNSIVDTYFDGYEVATGGLQIDMNASLTYYPNRQMKMWKECRGMYPMLRTAMPEKRQSGLAEGLLALNKRNMAAPKLQESVNEFEVIESTIEKAKKVFFDESRIDNSKLETFEGAARWWVKQSCTAQKQMLADVRTLSEIDVTSYNFMIKGDVKPKLDLSPQSEYSALQTVVYPDKIVNALFGPIMKEINERIRVALKPHVIYNTRMTSDELDPAVEFLDVREDHESVEIDFSKFDKSKTSLHIRVVIELYKLFGLDEMIAYLWEKSQCQTTIKDRVNGIIAQILYQQESGNCDTYGSNTWSAALSLLESLPLEKATFMIFGGDDSLIFFPKGMVIEDPCRRLASMWNFDCKLFNFKNNSFCGKFLIKVGEKYKFAPDPYKLLTKLGRKDIKNSDLLSEIFTSIGDNYKSYDDYRVLEALNVAVMERYKLRCDVMFGLLALKKYINSFDLFASLFSHKGRYQRVEVGRNFEW.

A methyltransferase region spans residues 58 to 820 (KRNLNEDQIQ…WAQMVEDSEV (763 aa)). The Alphavirus-like MT domain maps to 79 to 306 (VTSSVHRGTH…HNLNSLMLYV (228 aa)). Residues 543-573 (SELDEKVSLYEEYERERQRISDEIVSEKIGL) are a coiled coil. A disordered region spans residues 701–738 (QVEQDWPIGNLPDVDPDDSASAQVCLTESASTSSDEDC). Residues 720–733 (ASAQVCLTESASTS) show a composition bias toward polar residues. A (+)RNA virus helicase ATP-binding domain is found at 979–1140 (CDITFLMNEI…KLEIDNVVEK (162 aa)). Residues 1010 to 1272 (TLVDGVPGCG…RHRRSLVYYT (263 aa)) are helicase. 1014–1021 (GVPGCGKS) contributes to the ATP binding site. The (+)RNA virus helicase C-terminal domain maps to 1141 to 1303 (RLTYRSPLDV…MKHLHEEGVK (163 aa)). A RdRp catalytic domain is found at 1565 to 1678 (HESVEIDFSK…FFPKGMVIED (114 aa)).

It belongs to the ssRNA positive-strand viruses RNA-directed RNA polymerase family. In terms of assembly, heterodimer of a large and a small subunit.

The catalysed reaction is RNA(n) + a ribonucleoside 5'-triphosphate = RNA(n+1) + diphosphate. The enzyme catalyses ATP + H2O = ADP + phosphate + H(+). Functionally, is an RNA-dependent RNA polymerase active in viral RNA replication. In terms of biological role, is a methyltransferase active in RNA capping and an RNA helicase. Methyltransferase displays a cytoplasmic capping enzyme activity. This function is necessary since all viral RNAs are synthesized in the cytoplasm, and host capping enzymes are restricted to the nucleus. Helicase region probably exhibits NTPase and RNA unwinding activities (Potential). The chain is Replicase large subunit (rep) from Potato mop-top virus (isolate Potato/Sweden/Sw) (PMTV).